We begin with the raw amino-acid sequence, 125 residues long: uncharacterized protein (125 aa).

The protein localises to the plastid. It is found in the chloroplast. This is an uncharacterized protein from Guillardia theta (Cryptophyte).